Reading from the N-terminus, the 345-residue chain is DNA primase small subunit PriS (345 aa).

Catalysis depends on residues D95 and D97. Zn(2+) is bound by residues C106, H108, C114, and C117. The Zinc knuckle motif motif lies at 106 to 117 (CNHEPGKVCPIC). Residue D280 is part of the active site.

The protein belongs to the eukaryotic-type primase small subunit family. As to quaternary structure, heterodimer of a small subunit (PriS) and a large subunit (PriL). It depends on Mg(2+) as a cofactor. Requires Mn(2+) as cofactor.

Its function is as follows. Catalytic subunit of DNA primase, an RNA polymerase that catalyzes the synthesis of short RNA molecules used as primers for DNA polymerase during DNA replication. The small subunit contains the primase catalytic core and has DNA synthesis activity on its own, synthesizing DNA strands up to 3 kB. Binding to the large subunit stabilizes and modulates the activity, increasing the rate of DNA synthesis while decreasing the length of the DNA fragments, and conferring RNA synthesis capability for RNA fragments up to 150 bases. The DNA polymerase activity may enable DNA primase to also catalyze primer extension after primer synthesis. May also play a role in DNA repair. Displays gap-filling and strand-displacement activities. This is DNA primase small subunit PriS from Pyrococcus abyssi (strain GE5 / Orsay).